Here is a 374-residue protein sequence, read N- to C-terminus: Probable ethanolamine kinase (374 aa).

Arg93 and Asp252 together coordinate ATP.

The protein belongs to the choline/ethanolamine kinase family.

It catalyses the reaction ethanolamine + ATP = phosphoethanolamine + ADP + H(+). It participates in phospholipid metabolism; phosphatidylethanolamine biosynthesis; phosphatidylethanolamine from ethanolamine: step 1/3. In terms of biological role, involved in phospholipid biosynthesis. Catalyzes the first step in phosphatidylethanolamine biosynthesis. This is Probable ethanolamine kinase (EMB1187) from Arabidopsis thaliana (Mouse-ear cress).